The primary structure comprises 393 residues: Small RNA 2'-O-methyltransferase (393 aa).

Residues Ser-60, Asp-78, and Ser-114 each coordinate S-adenosyl-L-methionine. Glu-132, Glu-135, His-136, and His-181 together coordinate Mg(2+). Residues 283–309 (RVSHLPRRKEQDGEQGDKPKDIGGSKA) are disordered. A compositionally biased stretch (basic and acidic residues) spans 290–305 (RKEQDGEQGDKPKDIG).

The protein belongs to the methyltransferase superfamily. HEN1 family. The cofactor is Mg(2+).

It localises to the cytoplasm. The enzyme catalyses small RNA 3'-end nucleotide + S-adenosyl-L-methionine = small RNA 3'-end 2'-O-methylnucleotide + S-adenosyl-L-homocysteine + H(+). In terms of biological role, methyltransferase that adds a 2'-O-methyl group at the 3'-end of piRNAs, a class of 24 to 30 nucleotide RNAs that are generated by a Dicer-independent mechanism and are primarily derived from transposons and other repeated sequence elements. This probably protects the 3'-end of piRNAs from uridylation activity and subsequent degradation. Stabilization of piRNAs is essential for gametogenesis. The protein is Small RNA 2'-O-methyltransferase (HENMT1) of Macaca fascicularis (Crab-eating macaque).